The sequence spans 885 residues: Alanine--tRNA ligase (885 aa).

Residues His563, His567, Cys677, and His681 each contribute to the Zn(2+) site. The disordered stretch occupies residues 848–868 (LGGKGGGGRPDRAQGGAPSLA).

Belongs to the class-II aminoacyl-tRNA synthetase family. It depends on Zn(2+) as a cofactor.

The protein localises to the cytoplasm. It catalyses the reaction tRNA(Ala) + L-alanine + ATP = L-alanyl-tRNA(Ala) + AMP + diphosphate. Its function is as follows. Catalyzes the attachment of alanine to tRNA(Ala) in a two-step reaction: alanine is first activated by ATP to form Ala-AMP and then transferred to the acceptor end of tRNA(Ala). Also edits incorrectly charged Ser-tRNA(Ala) and Gly-tRNA(Ala) via its editing domain. The sequence is that of Alanine--tRNA ligase from Paracoccus denitrificans (strain Pd 1222).